The sequence spans 83 residues: UPF0729 protein CBG02799 (83 aa).

The interval 51 to 83 (QEKKEEEEEKEKSCCSTEAENTTEVTTETKKDQ) is disordered. Residues 67–76 (TEAENTTEVT) show a composition bias toward low complexity.

This sequence belongs to the UPF0729 family.

The polypeptide is UPF0729 protein CBG02799 (Caenorhabditis briggsae).